We begin with the raw amino-acid sequence, 469 residues long: Cysteine--tRNA ligase (469 aa).

Residue C33 coordinates Zn(2+). The short motif at 35-45 (PTVYNLLHIGN) is the 'HIGH' region element. Zn(2+) contacts are provided by C214, H239, and E243. The 'KMSKS' region signature appears at 271–275 (KMSKS). Position 274 (K274) interacts with ATP.

Belongs to the class-I aminoacyl-tRNA synthetase family. As to quaternary structure, monomer. Requires Zn(2+) as cofactor.

The protein resides in the cytoplasm. The enzyme catalyses tRNA(Cys) + L-cysteine + ATP = L-cysteinyl-tRNA(Cys) + AMP + diphosphate. This Petrotoga mobilis (strain DSM 10674 / SJ95) protein is Cysteine--tRNA ligase.